The chain runs to 556 residues: MLNLCHALRGVRQFSCSVIVKVKCASCSIKLQDQDPSKPGYYTKPKSLPDSKLNPDLQDLKYLLFSQDIQLSKQAIQNDPDLKTKRDLLLRVICKRCSNALHHNNYNPEEFPESTLNDILNYVPRGSNVMHIVPFVEFPLHLDPNVLKRNDLDTTLVLTKSDQVFKDKNAVSKKVPIFMKQFLKNTLRIDSNKTFAISALKNWNISMFYNYFKNYTYLLGNPNVGKSTLINTLLQKYLGYKVKIDSTGKINSPSEEVMQEAFTNPKNFFKIQAAGVSHIPNLTRSVQAYQVGGKILFDLPGYSTSTSRLRLEELIDERWLQRLRKTDLFNRKHIKQKTYESMKGTSQGGCYTVGGIFYLVPPKGSINQIVKYIPGPSKTFKNIEKGIDVFNSCNSSSGTHPLSRYCGIKSVICEKSQYKRYAIPPFIGSIEIVLKDIGYILLRTTGRYEFKGLHEIWIPRGIQVGIREPLENLIESGYQRYIETNGKESSCPRDRPIISSLYEMAPDEADTLNAVKKSYLEKTEKDLSARRFVDDDPYDLVQHLEKKKNPYWYYQW.

A mitochondrion-targeting transit peptide spans 1 to 21 (MLNLCHALRGVRQFSCSVIVK). One can recognise a CP-type G domain in the interval 113–305 (ESTLNDILNY…LFDLPGYSTS (193 aa)).

It belongs to the TRAFAC class YlqF/YawG GTPase family. GEP3 subfamily.

It localises to the mitochondrion. Functionally, interacts genetically with prohibitins and thus may be involved in the mitochondrial lipid metabolism. The protein is Genetic interactor of prohibitins 3, mitochondrial (GEP3) of Saccharomyces cerevisiae (strain YJM789) (Baker's yeast).